The sequence spans 339 residues: Tetraacyldisaccharide 4'-kinase (339 aa).

ATP is bound at residue 58–65; the sequence is TVGGSGKT.

It belongs to the LpxK family.

It catalyses the reaction a lipid A disaccharide + ATP = a lipid IVA + ADP + H(+). The protein operates within glycolipid biosynthesis; lipid IV(A) biosynthesis; lipid IV(A) from (3R)-3-hydroxytetradecanoyl-[acyl-carrier-protein] and UDP-N-acetyl-alpha-D-glucosamine: step 6/6. Transfers the gamma-phosphate of ATP to the 4'-position of a tetraacyldisaccharide 1-phosphate intermediate (termed DS-1-P) to form tetraacyldisaccharide 1,4'-bis-phosphate (lipid IVA). This is Tetraacyldisaccharide 4'-kinase from Shewanella baltica (strain OS185).